Here is a 240-residue protein sequence, read N- to C-terminus: MSHAAPAHKRILLKLSGEALMGSDAFGINHATIVRMVQEIAEVTRLGVQVAVVIGGGNIFRGVAGGAVGMDRATADYMGMLATVMNALALADAMNKQALVARVMSAIAIEQVVEPYVRPKALQYLEEGKVVIFAAGTGNPFFTTDTAAALRGAEIGAEVVLKATKVDGVYTADPQKDPTATRYAKLSFDEAMARNLGIMDATAFALCRDQRLPVRVFSIIKHGAFKRVVMGEDEGTLVYV.

14-17 (KLSG) is an ATP binding site. Gly-56 provides a ligand contact to UMP. 2 residues coordinate ATP: Gly-57 and Arg-61. UMP contacts are provided by residues Asp-76 and 137 to 144 (TGNPFFTT). 3 residues coordinate ATP: Thr-164, Tyr-170, and Asp-173.

This sequence belongs to the UMP kinase family. In terms of assembly, homohexamer.

The protein resides in the cytoplasm. The catalysed reaction is UMP + ATP = UDP + ADP. It functions in the pathway pyrimidine metabolism; CTP biosynthesis via de novo pathway; UDP from UMP (UMPK route): step 1/1. Inhibited by UTP. Catalyzes the reversible phosphorylation of UMP to UDP. This chain is Uridylate kinase, found in Verminephrobacter eiseniae (strain EF01-2).